The following is a 156-amino-acid chain: Endogenous retrovirus group K member 6 Pro protein (156 aa).

The Peptidase A2 domain occupies 21 to 96; the sequence is FEGLVDTGAD…IPLNLWGRDL (76 aa). Asp-26 is an active-site residue. The 46-residue stretch at 111–156 folds into the G-patch domain; it reads YSPTSQKIMTKMGYIPGKGLGKNEDGIKIPVEAKINQEREGIGNPC.

The protein belongs to the peptidase A2 family. HERV class-II K(HML-2) subfamily. Active as a homodimer. In terms of processing, autoproteolytically processed at the N-terminus. Expected C-terminal autoprocessing not detected. The sequence shown is that of the processed Pro protein.

The catalysed reaction is Processing at the authentic HIV-1 PR recognition site and release of the mature p17 matrix and the p24 capsid protein, as a result of the cleavage of the -SQNY-|-PIVQ- cleavage site.. Its function is as follows. Retroviral proteases have roles in the processing of the primary translation products and the maturation of the viral particle. Endogenous Pro proteins may have kept, lost or modified their original function during evolution. This is Endogenous retrovirus group K member 6 Pro protein (ERVK-6) from Homo sapiens (Human).